We begin with the raw amino-acid sequence, 446 residues long: Long-chain fatty acid transport protein (446 aa).

The signal sequence occupies residues 1 to 25; sequence MSQKTLFTKSALAVAVALISTQAWS.

Belongs to the OmpP1/FadL family. As to quaternary structure, has been isolated from outer membrane preparation as a homodimer.

The protein resides in the cell outer membrane. Its function is as follows. Involved in translocation of long-chain fatty acids across the outer membrane. It is a receptor for the bacteriophage T2. FadL may form a specific channel. The chain is Long-chain fatty acid transport protein (fadL) from Escherichia coli (strain K12).